Reading from the N-terminus, the 249-residue chain is Hydroxyacylglutathione hydrolase (249 aa).

Residues His-54, His-56, Asp-58, His-59, His-113, Asp-138, and His-176 each coordinate Zn(2+).

The protein belongs to the metallo-beta-lactamase superfamily. Glyoxalase II family. Monomer. It depends on Zn(2+) as a cofactor.

The enzyme catalyses an S-(2-hydroxyacyl)glutathione + H2O = a 2-hydroxy carboxylate + glutathione + H(+). The protein operates within secondary metabolite metabolism; methylglyoxal degradation; (R)-lactate from methylglyoxal: step 2/2. Its function is as follows. Thiolesterase that catalyzes the hydrolysis of S-D-lactoyl-glutathione to form glutathione and D-lactic acid. The protein is Hydroxyacylglutathione hydrolase of Synechococcus sp. (strain CC9605).